A 2636-amino-acid polypeptide reads, in one-letter code: MAHLIAFDHLIPFEMDLHNEENPDYEEKRLRAFSTFYHFGAKLYECLRTVAVLMEEDGDSMPVAEVLRHLGHEHLLSADIQYPPVAHIIDVIEERCLDDTQVLFKISDLLEDHKLEKPEDFLPYSPDPQKIPVDVAADTVTAVASMCYHFLATSFSEEVMRMSSPETARDPIPLESECLKLAIRTGSKKTETIKISDAEPESKPNYRHKPPVVSLELQQNAMLLLATRLGIEQFLILSKECGKLQFEGNHLSRITPLMEAAASSSEMIVELLLDYGMDPNAQSVPNCNTALIYAAATDDRDMVEVILEHEGPHKVDVYLINNYYRDAIMEAAIGESLDTLSLFLEMGYEPKTLKEADETKNDNSPLIFAAMKGFLDIATVILDYQDKNQQKTEEQTREIAEERYCALMEAAMEGQIAACKLLILRGTPTEGFKSNLPSPMMLACAGGFPELVEILLAAGARIDETGPHKNTCLIEACDGVSGDQVSVVRMLLNRHADVNAMNPESGDTPMSLAARHGNIAIMKMLYEKGADLTTGKITPIVEASIETHLECVQFILAHCKTIPQEQLSRALFAAAEGGCLKIVEELVRAGADLNFEQDERTAIMKAARFNHFDIVQYLVYKGASVNFKSAKNDATALSLACTYGNMDIAQFLIRNGADPMLRMDDGVNCFMEAAKHGSFDLMKLLVEFTKGNMDLDKSPPKLGINRCKTNKKKKKSQLRFQSSQILAMLNGKPSSERPFSSTEADMFSHLLKCQQQMVEINIDQSSDIITDPTDVEFLQKAVEGIQEAYGFTPEGQINFPRKPSKADMDSLYQGLLVPNIKMWAETIAHGWMTMERKVGRPIEFNSFRISPEVQIENALSAIQALTAVASGLDNPAYLKSVFNKMNNGEEIPRVPATVGSMNAASAALTGIGIHPDDALRLFAGNTFAKRAFRSSFFLLYHFSANPDDCVHEQYVAVHYMQEGPFRAALLKLDSMYRERKGAAISVQNMVSNFPIDAHQSNPPPAQQTGPKTTSLTTPQPDESNGATTIEHPTTPQIVFKSGGDKTMEALDPMKVYPGVLKLAADMERLYRANQTDVSREIAVTTAYIASTLPEKYSQEFNVESGDRILKRLLSGMSEKQRAAVMTRVKSTINSESGTNLLQRSVGTLSDKRLKEEYIKLFRETADTAFYDKSNRDKGSQQLKAAEQKKGKTSAANVGSQVRLIFLIARSKLLILQISAAGKLLMGKPANNTQVQQQQGQQQQGQLRRTHSEGDGTERAKARSNVIDKATDSTLETPLSIACSNGHREVVELLLKEGANIEHRDKKGFTPLIIAATYGHAPIVEVLLKNHAAIEAQSDRTKDTALSLACTAGRKDVVEMLLAHGANKEHRNVSDYTPLSLASSSGFLDIVNLLLTAGSEINSRTGSKLGISPLMLAAMNGHKETTKVLLEKGSDINAQIETNSYLFYRNTALTLASFQGRFEVVKLLLCYNANVEHRAKTGLTPLMECASGGYVDVGNLLIENGADPNASPVQSTKDTALTIAAEKGHEKFVQMLLDNDVIYDIRNKKGCSALWLACNGGHLGTAQALVFKGADTDMFDNRKMSPMVAAFRKGHIEIIKFLVGHAKQFPNETDLVRMQSTLECADLVARCGECIIIIRNAKKAQAETAEETANRLLQLIDDEKERDINKKQKIKDKKKQKKEAKKKFQAEQEQLSAPPSKPEPVVAPEPEPEPETEPVEEPAFEPTPPPVEEPPKEPPKPRRNRRKTNPDGVPKGSKPAAEQAVKPPPPPVAEEEPEPAELPYRPIVVKIPSPATVQAPMMSPGSYSESEDWQKAGKEGKKVRPKREGRGTAPSSAGSSQAKHRSNTSSISERQHSWEVDTKGVKAYEFTVPGKIVSRVIGKSGSNINAVREATLAQIEIDKLCGSKEDDRHITVRGSADVVSMAVNIIHLLIYDKDVLIHDAIRTATHGNVSVASSLSSEGTSKSAVDSTHSIPHSLSSASIARQSSPVPVPSQCNRSSKSHGNQATKDGANVWQQRMAARGETPPTQTQTKQQPTPSPQVQQPARQTASPAVRQSLAQSSVPQATENVTKPTQTPPASVQQPIDRVIAPPARREPAQVVQPVPPVHQHTPVPQQRPQEVAQPPRFPDPISRPAVSLQQHMQQIQQQPTFSKAPGTRLSNEFSRAPGPPVQPQTPPQSLPSRNDVFEDRLPFTAFKPTAPAPAPVTSIAPSTSTATSTASNGATLDDFDISKLRMYEDSRVQSIWGTDRTNGEEDTWGGLFTNLLQPNSTASSLNTATTKNDTSDWGSNDFMSQLLAGTSNQKTSSAPQQPVSSVNSQLSALETKGWMPSTATPPTARDPVQRQVPLFARSQSSNPSTLQHQQQQQRIMQDPHQSHLHQVMQQQHHSRIPQQFQQPQFSSQSHPSQSSMMPSTQQQLLSQLQAMNLGQQGSNPYDMLAHQLSMHRQENSSSVPGPSQPSANPYYSPSYTDSSVLGQLNMNTLSQRGIKQFDGFNNDQSQSSDGVIAALFNEQQQQKKNQQAGYMQQGQQSFGSTQRIGMMQPAPPPFVPQQAPGAPPGFGDLNRSASGSSQNRPMYPGYGAQQPQPFSQLTQADWDQRLLLQQQQQQRSSQQQQNPTNQGLPQKWSNTWNSSSRM.

11 ANK repeats span residues 252 to 281, 286 to 317, 361 to 390, 435 to 464, 468 to 500, 505 to 534, 536 to 564, 566 to 595, 598 to 627, 632 to 661, and 665 to 695; these read SRITPLMEAAASSSEMIVELLLDYGMDPNA, NCNTALIYAAATDDRDMVEVILEHEGPHKVDV, NDNSPLIFAAMKGFLDIATVILDYQDKNQQ, NLPSPMMLACAGGFPELVEILLAAGARIDE, HKNTCLIEACDGVSGDQVSVVRMLLNRHADVNA, SGDTPMSLAARHGNIAIMKMLYEKGADLTT, KITPIVEASIETHLECVQFILAHCKTIPQ, QLSRALFAAAEGGCLKIVEELVRAGADLNF, DERTAIMKAARFNHFDIVQYLVYKGASVNF, NDATALSLACTYGNMDIAQFLIRNGADPML, and DGVNCFMEAAKHGSFDLMKLLVEFTKGNMDL. Disordered regions lie at residues 994 to 1030, 1172 to 1191, and 1230 to 1268; these read PIDAHQSNPPPAQQTGPKTTSLTTPQPDESNGATTIE, KSNRDKGSQQLKAAEQKKGK, and NNTQVQQQQGQQQQGQLRRTHSEGDGTERAKARSNVIDK. Over residues 1006–1030 the composition is skewed to polar residues; sequence QQTGPKTTSLTTPQPDESNGATTIE. Positions 1233–1245 are enriched in low complexity; the sequence is QVQQQQGQQQQGQ. The span at 1249–1260 shows a compositional bias: basic and acidic residues; that stretch reads THSEGDGTERAK. ANK repeat units follow at residues 1273 to 1302, 1306 to 1335, 1340 to 1369, 1373 to 1402, 1408 to 1437, 1447 to 1476, 1480 to 1509, 1515 to 1546, 1548 to 1577, and 1581 to 1610; these read TLETPLSIACSNGHREVVELLLKEGANIEH, KGFTPLIIAATYGHAPIVEVLLKNHAAIEA, TKDTALSLACTAGRKDVVEMLLAHGANKEH, SDYTPLSLASSSGFLDIVNLLLTAGSEINS, LGISPLMLAAMNGHKETTKVLLEKGSDINA, YRNTALTLASFQGRFEVVKLLLCYNANVEH, TGLTPLMECASGGYVDVGNLLIENGADPNA, TKDTALTIAAEKGHEKFVQMLLDNDVIYDIRN, KGCSALWLACNGGHLGTAQALVFKGADTDM, and RKMSPMVAAFRKGHIEIIKFLVGHAKQFPN. The stretch at 1638–1696 forms a coiled coil; it reads RNAKKAQAETAEETANRLLQLIDDEKERDINKKQKIKDKKKQKKEAKKKFQAEQEQLSA. The interval 1669–1857 is disordered; the sequence is KKQKIKDKKK…SSISERQHSW (189 aa). The span at 1670–1686 shows a compositional bias: basic residues; sequence KQKIKDKKKQKKEAKKK. Residues 1698-1708 show a composition bias toward pro residues; the sequence is PSKPEPVVAPE. A compositionally biased stretch (acidic residues) spans 1709–1722; sequence PEPEPETEPVEEPA. The segment covering 1811-1829 has biased composition (basic and acidic residues); it reads DWQKAGKEGKKVRPKREGR. A compositionally biased stretch (polar residues) spans 1832-1851; that stretch reads APSSAGSSQAKHRSNTSSIS. The KH domain maps to 1864–1929; sequence VKAYEFTVPG…DVVSMAVNII (66 aa). Disordered stretches follow at residues 1980 to 2182, 2196 to 2221, 2269 to 2292, 2301 to 2320, 2352 to 2417, 2444 to 2465, and 2539 to 2636; these read SASI…SLPS, FKPTAPAPAPVTSIAPSTSTATSTAS, NSTASSLNTATTKNDTSDWGSNDF, SNQKTSSAPQQPVSSVNSQL, SQSS…TQQQ, MHRQENSSSVPGPSQPSANPYY, and GMMQ…SSRM. Residues 1994–2008 are compositionally biased toward polar residues; sequence SQCNRSSKSHGNQAT. Positions 2025 to 2045 are enriched in low complexity; that stretch reads TPPTQTQTKQQPTPSPQVQQP. The span at 2057-2083 shows a compositional bias: polar residues; that stretch reads SLAQSSVPQATENVTKPTQTPPASVQQ. Composition is skewed to low complexity over residues 2099 to 2119 and 2139 to 2148; these read QVVQPVPPVHQHTPVPQQRPQ and QQHMQQIQQQ. The segment covering 2167 to 2179 has biased composition (pro residues); it reads PGPPVQPQTPPQS. The segment covering 2269–2280 has biased composition (low complexity); the sequence is NSTASSLNTATT. A compositionally biased stretch (polar residues) spans 2281-2292; sequence KNDTSDWGSNDF. Low complexity-rich tracts occupy residues 2361–2373 and 2391–2417; these read QHQQQQQRIMQDP and PQQFQQPQFSSQSHPSQSSMMPSTQQQ. Composition is skewed to polar residues over residues 2449–2465, 2565–2574, and 2583–2595; these read NSSSVPGPSQPSANPYY, RSASGSSQNR, and QQPQPFSQLTQAD. The segment covering 2599–2615 has biased composition (low complexity); it reads RLLLQQQQQQRSSQQQQ. Polar residues predominate over residues 2616–2636; sequence NPTNQGLPQKWSNTWNSSSRM.

It belongs to the mask family.

It localises to the cytoplasm. This is Ankyrin repeat and KH domain-containing protein CBG24701 from Caenorhabditis briggsae.